A 520-amino-acid chain; its full sequence is Cytochrome P450 4F3 (520 aa).

The chain crosses the membrane as a helical span at residues 11–31; that stretch reads LWPMAASPWLLLLLVGASWLL. 2 residues coordinate heme: Glu328 and Cys468.

Belongs to the cytochrome P450 family. Heme serves as cofactor. Selectively expressed in blood neutrophils and bone marrow cells. Coexpressed with CYP4F3B in prostate, ileum and trachea. As to expression, selectively expressed in liver and kidney. It is also the predominant CYP4F isoform in trachea and tissues of the gastrointestinal tract.

The protein resides in the endoplasmic reticulum membrane. It localises to the microsome membrane. It catalyses the reaction an organic molecule + reduced [NADPH--hemoprotein reductase] + O2 = an alcohol + oxidized [NADPH--hemoprotein reductase] + H2O + H(+). The catalysed reaction is leukotriene B4 + reduced [NADPH--hemoprotein reductase] + O2 = 20-hydroxy-leukotriene B4 + oxidized [NADPH--hemoprotein reductase] + H2O + H(+). It carries out the reaction 20-hydroxy-leukotriene B4 + reduced [NADPH--hemoprotein reductase] + O2 = 20-oxo-leukotriene B4 + oxidized [NADPH--hemoprotein reductase] + 2 H2O + H(+). The enzyme catalyses 20-oxo-leukotriene B4 + reduced [NADPH--hemoprotein reductase] + O2 = 20-carboxy-leukotriene B4 + oxidized [NADPH--hemoprotein reductase] + H2O + 2 H(+). It catalyses the reaction (5Z,8Z,11Z)-eicosatrienoate + reduced [NADPH--hemoprotein reductase] + O2 = 20-hydroxy-(5Z,8Z,11Z)-eicosatrienoate + oxidized [NADPH--hemoprotein reductase] + H2O + H(+). The catalysed reaction is (5Z,8Z,11Z,14Z)-eicosatetraenoate + reduced [NADPH--hemoprotein reductase] + O2 = 20-hydroxy-(5Z,8Z,11Z,14Z)-eicosatetraenoate + oxidized [NADPH--hemoprotein reductase] + H2O + H(+). It carries out the reaction (5Z,8Z,11Z,14Z,17Z)-eicosapentaenoate + reduced [NADPH--hemoprotein reductase] + O2 = 19-hydroxy-(5Z,8Z,11Z,14Z,17Z)-eicosapentaenoate + oxidized [NADPH--hemoprotein reductase] + H2O + H(+). The enzyme catalyses (5Z,8Z,11Z,14Z,17Z)-eicosapentaenoate + reduced [NADPH--hemoprotein reductase] + O2 = 20-hydroxy-(5Z,8Z,11Z,14Z,17Z)-eicosapentaenoate + oxidized [NADPH--hemoprotein reductase] + H2O + H(+). It catalyses the reaction (4Z,7Z,10Z,13Z,16Z,19Z)-docosahexaenoate + reduced [NADPH--hemoprotein reductase] + O2 = 21-hydroxy-(4Z,7Z,10Z,13Z,16Z,19Z)-docosahexaenoate + oxidized [NADPH--hemoprotein reductase] + H2O + H(+). The catalysed reaction is (4Z,7Z,10Z,13Z,16Z,19Z)-docosahexaenoate + reduced [NADPH--hemoprotein reductase] + O2 = 22-hydroxy-(4Z,7Z,10Z,13Z,16Z,19Z)-docosahexaenoate + oxidized [NADPH--hemoprotein reductase] + H2O + H(+). It carries out the reaction 8,9-epoxy-(5Z,11Z,14Z)-eicosatrienoate + reduced [NADPH--hemoprotein reductase] + O2 = 20-hydroxy-8,9-epoxy-(5Z,11Z,14Z)-eicosatrienoate + oxidized [NADPH--hemoprotein reductase] + H2O + H(+). The enzyme catalyses 11,12-epoxy-(5Z,8Z,14Z)-eicosatrienoate + reduced [NADPH--hemoprotein reductase] + O2 = 20-hydroxy-11,12-epoxy-(5Z,8Z,14Z)-eicosatrienoate + oxidized [NADPH--hemoprotein reductase] + H2O + H(+). It catalyses the reaction 14,15-epoxy-(5Z,8Z,11Z)-eicosatrienoate + reduced [NADPH--hemoprotein reductase] + O2 = 20-hydroxy-14,15-epoxy-(5Z,8Z,11Z)-eicosatrienoate + oxidized [NADPH--hemoprotein reductase] + H2O + H(+). The catalysed reaction is 12,13-epoxy-(9Z)-octadecenoate + reduced [NADPH--hemoprotein reductase] + O2 = 18-hydroxy-12,13-epoxy-(9Z)-octadecenoate + oxidized [NADPH--hemoprotein reductase] + H2O + H(+). It carries out the reaction 9,10-epoxy-(12Z)-octadecenoate + reduced [NADPH--hemoprotein reductase] + O2 = 18-hydroxy-9,10-epoxy-(12Z)-octadecenoate + oxidized [NADPH--hemoprotein reductase] + H2O + H(+). The enzyme catalyses 9,10-epoxyoctadecanoate + reduced [NADPH--hemoprotein reductase] + O2 = 18-hydroxy-9,10-epoxy-octadecanoate + oxidized [NADPH--hemoprotein reductase] + H2O + H(+). It catalyses the reaction (12R)-hydroxy-(9Z)-octadecenoate + reduced [NADPH--hemoprotein reductase] + O2 = (12R),18-dihydroxy-(9Z)-octadecenoate + oxidized [NADPH--hemoprotein reductase] + H2O + H(+). The catalysed reaction is 12-hydroxyoctadecanoate + reduced [NADPH--hemoprotein reductase] + O2 = 12,18-dihydroxyoctadecanoate + oxidized [NADPH--hemoprotein reductase] + H2O + H(+). It carries out the reaction 5-hydroxy-(6E,8Z,11Z,14Z)-eicosatetraenoate + reduced [NADPH--hemoprotein reductase] + O2 = 5,20-dihydroxy-(6E,8Z,11Z,14Z)-eicosatetraenoate + oxidized [NADPH--hemoprotein reductase] + H2O + H(+). The enzyme catalyses 8-hydroxy-(5Z,9E,11Z,14Z)-eicosatetraenoate + reduced [NADPH--hemoprotein reductase] + O2 = 8,20-dihydroxy-(5Z,9E,11Z,14Z)-eicosatetraenoate + oxidized [NADPH--hemoprotein reductase] + H2O + H(+). It catalyses the reaction 12-hydroxy-(5Z,8Z,10E,14Z)-eicosatetraenoate + reduced [NADPH--hemoprotein reductase] + O2 = 12,20-dihydroxy-(5Z,8Z,10E,14Z)-eicosatetraenoate + oxidized [NADPH--hemoprotein reductase] + H2O + H(+). The catalysed reaction is 5-hydroxy-(6E,8Z,11Z,14Z,17Z)-eicosapentaenoate + reduced [NADPH--hemoprotein reductase] + O2 = 5,20-dihydroxy-(6E,8Z,11Z,14Z,17Z)-eicosapentaenoate + oxidized [NADPH--hemoprotein reductase] + H2O + H(+). It carries out the reaction lipoxin A4 + reduced [NADPH--hemoprotein reductase] + O2 = 20-hydroxy-lipoxin A4 + oxidized [NADPH--hemoprotein reductase] + H2O + H(+). The enzyme catalyses lipoxin B4 + reduced [NADPH--hemoprotein reductase] + O2 = 20-hydroxy-lipoxin B4 + oxidized [NADPH--hemoprotein reductase] + H2O + H(+). It catalyses the reaction 22-hydroxydocosanoate + reduced [NADPH--hemoprotein reductase] + O2 = 22-oxodocosanoate + oxidized [NADPH--hemoprotein reductase] + 2 H2O + H(+). The catalysed reaction is 22-oxodocosanoate + reduced [NADPH--hemoprotein reductase] + O2 = docosanedioate + oxidized [NADPH--hemoprotein reductase] + H2O + 2 H(+). It carries out the reaction docosanoate + reduced [NADPH--hemoprotein reductase] + O2 = 22-hydroxydocosanoate + oxidized [NADPH--hemoprotein reductase] + H2O + H(+). The enzyme catalyses tetracosanoate + reduced [NADPH--hemoprotein reductase] + O2 = 24-hydroxytetracosanoate + oxidized [NADPH--hemoprotein reductase] + H2O + H(+). It catalyses the reaction hexacosanoate + reduced [NADPH--hemoprotein reductase] + O2 = 26-hydroxyhexacosanoate + oxidized [NADPH--hemoprotein reductase] + H2O + H(+). The catalysed reaction is 26-hydroxyhexacosanoate + reduced [NADPH--hemoprotein reductase] + O2 = 26-oxohexacosanoate + oxidized [NADPH--hemoprotein reductase] + 2 H2O + H(+). It carries out the reaction 26-oxohexacosanoate + reduced [NADPH--hemoprotein reductase] + O2 = hexacosanedioate + oxidized [NADPH--hemoprotein reductase] + H2O + 2 H(+). The enzyme catalyses 3-hydroxyoctadecanoate + reduced [NADPH--hemoprotein reductase] + O2 = 3,18-dihydroxyoctadecanoate + oxidized [NADPH--hemoprotein reductase] + H2O + H(+). It catalyses the reaction 3-hydroxyhexadecanoate + reduced [NADPH--hemoprotein reductase] + O2 = 3,16-dihydroxyhexadecanoate + oxidized [NADPH--hemoprotein reductase] + H2O + H(+). The protein operates within lipid metabolism; leukotriene B4 degradation. It participates in lipid metabolism; arachidonate metabolism. With respect to regulation, inhibited by carbon monoxide (CO). Its function is as follows. A cytochrome P450 monooxygenase involved in the metabolism of various endogenous substrates, including fatty acids and their oxygenated derivatives (oxylipins). Mechanistically, uses molecular oxygen inserting one oxygen atom into a substrate, and reducing the second into a water molecule, with two electrons provided by NADPH via cytochrome P450 reductase (CPR; NADPH-ferrihemoprotein reductase). May play a role in inactivation of pro-inflammatory and anti-inflammatory oxylipins during the resolution of inflammation. In terms of biological role, catalyzes predominantly the oxidation of the terminal carbon (omega-oxidation) of oxylipins in myeloid cells, displaying higher affinity for arachidonate metabolite leukotriene B4 (LTB4). Inactivates LTB4 via three successive oxidative transformations to 20-hydroxy-LTB4, then to 20-oxo-LTB4 and to 20-carboxy-LTB4. Has omega-hydroxylase activity toward long-chain fatty acid epoxides with preference for 8,9-epoxy-(5Z,11Z,14Z)-eicosatrienoate (EET) and 9,10-epoxyoctadecanoate. Omega-hydroxylates monohydroxy polyunsaturated fatty acids (PUFAs), including hydroxyeicosatetraenoates (HETEs) and hydroxyeicosapentaenoates (HEPEs), to dihydroxy compounds. Contributes to the degradation of saturated very long-chain fatty acids (VLCFAs) such as docosanoic acid, by catalyzing successive omega-oxidations to the corresponding dicarboxylic acid, thereby initiating chain shortening. Has low hydroxylase activity toward PUFAs. Functionally, catalyzes predominantly the oxidation of the terminal carbon (omega-oxidation) of polyunsaturated fatty acids (PUFAs). Participates in the conversion of arachidonic acid to 20-hydroxyeicosatetraenoic acid (20-HETE), a signaling molecule acting both as vasoconstrictive and natriuretic with overall effect on arterial blood pressure. Has high omega-hydroxylase activity toward other PUFAs, including eicosatrienoic acid (ETA), eicosapentaenoic acid (EPA) and docosahexaenoic acid (DHA). Can also catalyze the oxidation of the penultimate carbon (omega-1 oxidation) of PUFAs with lower efficiency. Contributes to the degradation of saturated very long-chain fatty acids (VLCFAs) such as docosanoic acid and hexacosanoic acid, by catalyzing successive omega-oxidations to the corresponding dicarboxylic acids, thereby initiating chain shortening. Omega-hydroxylates long-chain 3-hydroxy fatty acids, likely initiating the oxidative conversion to the corresponding 3-hydroxydicarboxylic fatty acids. Has omega-hydroxylase activity toward long-chain fatty acid epoxides with preference for 8,9-epoxy-(5Z,11Z,14Z)-eicosatrienoate (EET) and 9,10-epoxyoctadecanoate. This chain is Cytochrome P450 4F3, found in Homo sapiens (Human).